The following is a 596-amino-acid chain: Arrestin domain-containing protein C31A2.12 (596 aa).

Residues 194–211 (AYAIGSYIPIHFVLVPLL) traverse the membrane as a helical segment. Disordered stretches follow at residues 363–387 (NLDT…TYAS) and 405–446 (QQQP…VITR). Phosphothreonine occurs at positions 373 and 374. Composition is skewed to polar residues over residues 405–420 (QQQP…SPSN) and 430–446 (SLGS…VITR). 4 positions are modified to phosphoserine: Ser452, Ser474, Ser493, and Ser497. Positions 493–596 (SRPPSPGIVT…MLPSGFSRRN (104 aa)) are disordered. Residues Thr502 and Thr507 each carry the phosphothreonine modification. The segment covering 504–522 (PQRTSPSFFVSPTESTRQS) has biased composition (polar residues). Position 514 is a phosphoserine (Ser514). Residues 531–555 (HSTSSSSGISPSHSSASLAHLSQAS) are compositionally biased toward low complexity.

The protein belongs to the arrestin family.

Its subcellular location is the membrane. The protein is Arrestin domain-containing protein C31A2.12 of Schizosaccharomyces pombe (strain 972 / ATCC 24843) (Fission yeast).